We begin with the raw amino-acid sequence, 341 residues long: Heat-shock protein cognate (HSC) co-chaperone sgt12 (341 aa).

Positions 86-123 (PSKEPASAGAQAQSTEAQQPKAGAPTPESDKLKSEGNA) are disordered. TPR repeat units follow at residues 114–147 (SDKLKSEGNAAMARKEYSKAIDLYTQALSIAPAN), 148–181 (PIYLSNRAAAYSASGQHEKAAEDAELATVVDPKY), and 182–215 (SKAWSRLGLARFDMADYKGAKEAYEKGIEAEGNG). The segment at 232 to 280 (EEANRGAEPPADDVDDAAGASRGAGGMPDLSSLASMLGGRGGGGGGMPD) is disordered. The segment covering 269–278 (GGRGGGGGGM) has biased composition (gly residues).

Belongs to the SGT family. Forms homodimers. Component of the get4/get5/sgt2 sorting complex. Dimers of sgt2 bind directly a single get5. Binds HSC family members ssa1, sse1, hsp104 and hsc82 via its TPR domain.

The protein localises to the cytoplasm. Heat-shock protein cognate (HSC) co-chaperone that preferentially binds endoplasmic reticulum-destined tail-anchored (TA) proteins and directs them to the GET (guided entry of TA proteins) pathway via get4 and get5. Get4 and get5 form an obligate complex that catalyzes the transfer of tail-anchored proteins destined to the endoplasmic reticulum from sgt2 to the cytosolic targeting factor which then targets the TA protein to the ER membrane via get1/get2. The chain is Heat-shock protein cognate (HSC) co-chaperone sgt12 from Aspergillus fumigatus (strain ATCC MYA-4609 / CBS 101355 / FGSC A1100 / Af293) (Neosartorya fumigata).